A 707-amino-acid polypeptide reads, in one-letter code: Terpene cyclase/mutase atnI (707 aa).

Over residues 1-20 the composition is skewed to polar residues; it reads MGQHIASSESSTNGHVSLET. Positions 1–22 are disordered; sequence MGQHIASSESSTNGHVSLETNG. PFTB repeat units follow at residues 130-173, 494-535, 571-608, and 620-661; these read AVEI…RLLG, LRDA…VGKT, TAQG…ETLA, and SRRG…VQTA.

The protein belongs to the terpene cyclase/mutase family.

It participates in secondary metabolite biosynthesis; terpenoid biosynthesis. Its function is as follows. Terpene cyclase/mutase; part of the gene cluster that mediates the biosynthesis of the meroterpenoids arthripenoids. The pathway begins with the HR-PKS atnH that catalyzes two chain-extension steps to form a reduced triketide, which then primes the SAT domain in the NR-PKS atnG to initiate three more cycles of extension to give a linear hexaketide corresponding to the polyketide part of arthripenoids. The FAD-dependent monooxygenase atnJ then performs an oxidative decarboxylation at C11 of the atnH/atnG product, via an electrophilic aromatic hydroxylation with concomitant ipso-decarboxylation. The membrane-bound polyprenyl transferase atnF then introduces a farnesyl group before the FAD-dependent monooxygenase atnK functions as the first epoxidase on terminal C12'-C13' olefin, followed by a second epoxidation on C7'-C8' catalyzed by atnA. The terpene cyclase/mutase atnI then initiates the sequential tricyclic ring formation through protonation of the terminal epoxide and catalyzes the regioselective and stereoselective 6/6/6-tricyclic ring formation. The cytochrome P450 monooxygenase atnM is responsible for hydroxylating both C1' and C10'. The next steps may involve ketoreduction and acetyl transfer by the ketoreductase atnB and the acetyltransferase atnC, and lead to the production of arthripenoid B, the final biosynthetic product of the atn cluster. The hydroquinone moiety in arthripenoid B is prone to undergo spontaneous oxidation to afford a benzoquinone compound, a key intermediate for generating structure diversity. For instance, addition of a cysteine followed by ring contraction gives arthripenoid A, tautomerization gives the main product arthripenoid C, addition of a molecular of water or amine affords arthripenoid D or E, respectively, and loss of one water forms arthripenoid F. This Arthrinium sp protein is Terpene cyclase/mutase atnI.